We begin with the raw amino-acid sequence, 143 residues long: Transcriptional regulator MraZ (143 aa).

SpoVT-AbrB domains lie at 5–47 (TYTP…PRAE) and 76–119 (TDEQ…DAAA).

This sequence belongs to the MraZ family. As to quaternary structure, forms oligomers.

Its subcellular location is the cytoplasm. It localises to the nucleoid. The protein is Transcriptional regulator MraZ of Mycobacterium sp. (strain JLS).